The chain runs to 293 residues: ELMO domain-containing protein 2 (293 aa).

Positions 126–282 (QHEELLMKLW…KFHEKIKGLL (157 aa)) constitute an ELMO domain.

As to expression, alveolar cells (morphologically type II cells) and alveolar macrophages (at protein level). Expressed in brain, colon, heart, kidney, liver, lung, muscle, placenta, small intestine, spleen, stomach and testis. In lung it is expressed in alveolar macrophages and alveolar walls.

Its function is as follows. Acts as a GTPase-activating protein (GAP) toward guanine nucleotide exchange factors like ARL2, ARL3, ARF1 and ARF6, but not for GTPases outside the Arf family. Regulates IFN-related antiviral responses. In Homo sapiens (Human), this protein is ELMO domain-containing protein 2 (ELMOD2).